The following is a 958-amino-acid chain: Glycine dehydrogenase (decarboxylating) (958 aa).

At lysine 705 the chain carries N6-(pyridoxal phosphate)lysine.

It belongs to the GcvP family. As to quaternary structure, the glycine cleavage system is composed of four proteins: P, T, L and H. Pyridoxal 5'-phosphate serves as cofactor.

It carries out the reaction N(6)-[(R)-lipoyl]-L-lysyl-[glycine-cleavage complex H protein] + glycine + H(+) = N(6)-[(R)-S(8)-aminomethyldihydrolipoyl]-L-lysyl-[glycine-cleavage complex H protein] + CO2. In terms of biological role, the glycine cleavage system catalyzes the degradation of glycine. The P protein binds the alpha-amino group of glycine through its pyridoxal phosphate cofactor; CO(2) is released and the remaining methylamine moiety is then transferred to the lipoamide cofactor of the H protein. This is Glycine dehydrogenase (decarboxylating) from Synechococcus sp. (strain CC9902).